The sequence spans 524 residues: Bifunctional purine biosynthesis protein PurH (524 aa).

One can recognise an MGS-like domain in the interval 1–145 (MIKQALLSVS…KNHRDVTVIV (145 aa)).

It belongs to the PurH family.

It catalyses the reaction (6R)-10-formyltetrahydrofolate + 5-amino-1-(5-phospho-beta-D-ribosyl)imidazole-4-carboxamide = 5-formamido-1-(5-phospho-D-ribosyl)imidazole-4-carboxamide + (6S)-5,6,7,8-tetrahydrofolate. The enzyme catalyses IMP + H2O = 5-formamido-1-(5-phospho-D-ribosyl)imidazole-4-carboxamide. Its pathway is purine metabolism; IMP biosynthesis via de novo pathway; 5-formamido-1-(5-phospho-D-ribosyl)imidazole-4-carboxamide from 5-amino-1-(5-phospho-D-ribosyl)imidazole-4-carboxamide (10-formyl THF route): step 1/1. The protein operates within purine metabolism; IMP biosynthesis via de novo pathway; IMP from 5-formamido-1-(5-phospho-D-ribosyl)imidazole-4-carboxamide: step 1/1. The chain is Bifunctional purine biosynthesis protein PurH from Cupriavidus necator (strain ATCC 17699 / DSM 428 / KCTC 22496 / NCIMB 10442 / H16 / Stanier 337) (Ralstonia eutropha).